The primary structure comprises 366 residues: MAP kinase-activated protein kinase 2 (366 aa).

Residues 30 to 291 enclose the Protein kinase domain; the sequence is KVTSQVLGLG…ITEFMNHPWI (262 aa). Residues 36–44 and K59 contribute to the ATP site; that span reads LGLGINGKV. 105-107 is a staurosporine binding site; that stretch reads ECL. Catalysis depends on D152, which acts as the Proton acceptor. A Phosphothreonine; by MAPK14 modification is found at T188. Position 238 is a phosphoserine; by MAPK14 (S238). S294 is modified (phosphoserine; by autocatalysis). Residues 294 to 330 are autoinhibitory helix; sequence STKVPQTPLHTSRVLKEDKERWEDVKEEMTSALATMR. Position 300 is a phosphothreonine; by MAPK14 (T300). K319 is covalently cross-linked (Glycyl lysine isopeptide (Lys-Gly) (interchain with G-Cter in SUMO)). The Nuclear export signal (NES) signature appears at 322-331; the sequence is MTSALATMRV. Residues 332-356 are p38 MAPK-binding site; the sequence is DYEQIKIKKIEDASNPLLLKRRKKA. 2 consecutive short sequence motifs (bipartite nuclear localization signal) follow at residues 337 to 340 and 351 to 355; these read KIKK and KRRKK.

Belongs to the protein kinase superfamily. CAMK Ser/Thr protein kinase family. In terms of assembly, heterodimer with p38-alpha/MAPK14; this heterodimer forms a stable complex: molecules are positioned 'face to face' so that the ATP-binding sites of both kinases are at the heterodimer interface. Interacts with PHC2. Interacts with HSF1. In terms of processing, sumoylation inhibits the protein kinase activity. Phosphorylated and activated by MAP kinase p38-alpha/MAPK14 at Thr-188, Ser-238 and Thr-300.

It localises to the cytoplasm. The protein localises to the nucleus. It carries out the reaction L-seryl-[protein] + ATP = O-phospho-L-seryl-[protein] + ADP + H(+). It catalyses the reaction L-threonyl-[protein] + ATP = O-phospho-L-threonyl-[protein] + ADP + H(+). Its activity is regulated as follows. Activated following phosphorylation by p38-alpha/MAPK14 following various stresses. Inhibited following sumoylation. Specifically inhibited by pyrrolopyridine inhibitors. In terms of biological role, stress-activated serine/threonine-protein kinase involved in cytokine production, endocytosis, reorganization of the cytoskeleton, cell migration, cell cycle control, chromatin remodeling, DNA damage response and transcriptional regulation. Following stress, it is phosphorylated and activated by MAP kinase p38-alpha/MAPK14, leading to phosphorylation of substrates. Phosphorylates serine in the peptide sequence, Hyd-X-R-X(2)-S, where Hyd is a large hydrophobic residue. Phosphorylates ALOX5, CDC25B, CDC25C, CEP131, ELAVL1, HNRNPA0, HSP27/HSPB1, KRT18, KRT20, LIMK1, LSP1, PABPC1, PARN, PDE4A, RCSD1, RPS6KA3, TAB3 and TTP/ZFP36. Phosphorylates HSF1; leading to the interaction with HSP90 proteins and inhibiting HSF1 homotrimerization, DNA-binding and transactivation activities. Mediates phosphorylation of HSP27/HSPB1 in response to stress, leading to dissociation of HSP27/HSPB1 from large small heat-shock protein (sHsps) oligomers and impairment of their chaperone activities and ability to protect against oxidative stress effectively. Involved in inflammatory response by regulating tumor necrosis factor (TNF) and IL6 production post-transcriptionally: acts by phosphorylating AU-rich elements (AREs)-binding proteins ELAVL1, HNRNPA0, PABPC1 and TTP/ZFP36, leading to regulate the stability and translation of TNF and IL6 mRNAs. Phosphorylation of TTP/ZFP36, a major post-transcriptional regulator of TNF, promotes its binding to 14-3-3 proteins and reduces its ARE mRNA affinity leading to inhibition of dependent degradation of ARE-containing transcripts. Phosphorylates CEP131 in response to cellular stress following ultraviolet irradiation which promotes binding of CEP131 to 14-3-3 proteins and inhibits formation of novel centriolar satellites. Also involved in late G2/M checkpoint following DNA damage through a process of post-transcriptional mRNA stabilization: following DNA damage, relocalizes from nucleus to cytoplasm and phosphorylates HNRNPA0 and PARN, leading to stabilization of GADD45A mRNA. Involved in toll-like receptor signaling pathway (TLR) in dendritic cells: required for acute TLR-induced macropinocytosis by phosphorylating and activating RPS6KA3. In Oryctolagus cuniculus (Rabbit), this protein is MAP kinase-activated protein kinase 2 (MAPKAPK2).